A 39-amino-acid polypeptide reads, in one-letter code: Antimicrobial peptide CHP1 (39 aa).

3 disulfide bridges follow: cysteine 6–cysteine 28, cysteine 13–cysteine 34, and cysteine 18–cysteine 35.

Its function is as follows. Bactericidal activity; inhibits S.aureus and E.coli. The protein is Antimicrobial peptide CHP1 of Gallus gallus (Chicken).